The primary structure comprises 339 residues: tRNA-dihydrouridine(20/20a) synthase (339 aa).

FMN-binding positions include 26-28 (PML) and Q78. The active-site Proton donor is C108. FMN-binding positions include K147, H180, 220–222 (NGG), and 242–243 (GR).

It belongs to the Dus family. DusA subfamily. The cofactor is FMN.

The enzyme catalyses 5,6-dihydrouridine(20) in tRNA + NADP(+) = uridine(20) in tRNA + NADPH + H(+). The catalysed reaction is 5,6-dihydrouridine(20) in tRNA + NAD(+) = uridine(20) in tRNA + NADH + H(+). It catalyses the reaction 5,6-dihydrouridine(20a) in tRNA + NADP(+) = uridine(20a) in tRNA + NADPH + H(+). It carries out the reaction 5,6-dihydrouridine(20a) in tRNA + NAD(+) = uridine(20a) in tRNA + NADH + H(+). In terms of biological role, catalyzes the synthesis of 5,6-dihydrouridine (D), a modified base found in the D-loop of most tRNAs, via the reduction of the C5-C6 double bond in target uridines. Specifically modifies U20 and U20a in tRNAs. In Shigella flexneri, this protein is tRNA-dihydrouridine(20/20a) synthase.